The chain runs to 134 residues: Cystatin-1 (134 aa).

The N-terminal stretch at 1-17 (MKAIYLILTVLCGFSAS) is a signal peptide. A Cystatin domain is found at 21–116 (GGWRDKDVDD…CTAIIWTRSW (96 aa)). Positions 65–69 (QVVSG) match the Secondary area of contact motif. Disulfide bonds link cysteine 83/cysteine 96 and cysteine 107/cysteine 127.

Belongs to the cystatin family. In terms of tissue distribution, expressed by the venom gland.

The protein resides in the secreted. Functionally, inhibits various C1 cysteine proteases. This protein has no toxic activity and its function in the venom is unknown. It may play a role as a housekeeping or regulatory protein. In Chilobrachys guangxiensis (Chinese earth tiger tarantula), this protein is Cystatin-1.